Reading from the N-terminus, the 261-residue chain is Glucosamine-6-phosphate deaminase (261 aa).

The Proton acceptor; for enolization step role is filled by Asp-67. Asn-135 acts as the For ring-opening step in catalysis. His-137 (proton acceptor; for ring-opening step) is an active-site residue. Glu-142 functions as the For ring-opening step in the catalytic mechanism.

It belongs to the glucosamine/galactosamine-6-phosphate isomerase family. NagB subfamily. In terms of assembly, homohexamer.

The catalysed reaction is alpha-D-glucosamine 6-phosphate + H2O = beta-D-fructose 6-phosphate + NH4(+). It functions in the pathway amino-sugar metabolism; N-acetylneuraminate degradation; D-fructose 6-phosphate from N-acetylneuraminate: step 5/5. Functionally, catalyzes the reversible isomerization-deamination of glucosamine 6-phosphate (GlcN6P) to form fructose 6-phosphate (Fru6P) and ammonium ion. This chain is Glucosamine-6-phosphate deaminase, found in Hahella chejuensis (strain KCTC 2396).